Consider the following 200-residue polypeptide: Protein GrpE (200 aa).

Composition is skewed to acidic residues over residues 1-17 and 34-44; these read MNEQ…EQFD and AFAEAGEETRD. Positions 1–49 are disordered; the sequence is MNEQPNEELQSEDEQFDPQETVSFEGETAANDEAFAEAGEETRDEEMTR.

The protein belongs to the GrpE family. Homodimer.

It is found in the cytoplasm. Participates actively in the response to hyperosmotic and heat shock by preventing the aggregation of stress-denatured proteins, in association with DnaK and GrpE. It is the nucleotide exchange factor for DnaK and may function as a thermosensor. Unfolded proteins bind initially to DnaJ; upon interaction with the DnaJ-bound protein, DnaK hydrolyzes its bound ATP, resulting in the formation of a stable complex. GrpE releases ADP from DnaK; ATP binding to DnaK triggers the release of the substrate protein, thus completing the reaction cycle. Several rounds of ATP-dependent interactions between DnaJ, DnaK and GrpE are required for fully efficient folding. This Rhodopirellula baltica (strain DSM 10527 / NCIMB 13988 / SH1) protein is Protein GrpE.